Reading from the N-terminus, the 250-residue chain is Anaphase-promoting complex subunit DOC1 (250 aa).

In terms of domain architecture, DOC spans 60–246; sequence PTPENLQHMF…LPETNNVFQD (187 aa).

It belongs to the APC10 family. In terms of assembly, the APC/C is composed of at least 13 subunits that stay tightly associated throughout the cell cycle: APC1, APC2, APC4, APC5, APC9, APC11, CDC16, CDC23, CDC26, CDC27, DOC1, MND2 and SWM1.

It localises to the cytoplasm. It is found in the nucleus. Its pathway is protein modification; protein ubiquitination. Its function is as follows. Component of the anaphase promoting complex/cyclosome (APC/C), a cell cycle-regulated E3 ubiquitin-protein ligase complex that controls progression through mitosis and the G1 phase of the cell cycle. The APC/C is thought to confer substrate specificity and, in the presence of ubiquitin-conjugating E2 enzymes, it catalyzes the formation of protein-ubiquitin conjugates that are subsequently degraded by the 26S proteasome. In early mitosis, the APC/C is activated by CDC20 and targets securin PDS1, the B-type cyclin CLB5, and other anaphase inhibitory proteins for proteolysis, thereby triggering the separation of sister chromatids at the metaphase-to-anaphase transition. In late mitosis and in G1, degradation of CLB5 allows activation of the APC/C by CDH1, which is needed to destroy CDC20 and the B-type cyclin CLB2 to allow exit from mitosis and creating the low CDK state necessary for cytokinesis and for reforming prereplicative complexes in G1 prior to another round of replication. DOC1 is required, together with the coactivators CDH1 and CDC20, for recognition and binding of the substrates. This Saccharomyces cerevisiae (strain ATCC 204508 / S288c) (Baker's yeast) protein is Anaphase-promoting complex subunit DOC1 (DOC1).